Reading from the N-terminus, the 200-residue chain is Probable GTP-binding protein EngB (200 aa).

One can recognise an EngB-type G domain in the interval 23–197; it reads KNSEVVFIGR…RERVLKDVLG (175 aa). GTP contacts are provided by residues 31–38, 58–62, 83–86, 153–156, and 175–177; these read GRSNVGKS, GKTQL, DLPG, TKMD, and FTA. 2 residues coordinate Mg(2+): Ser38 and Thr60.

It belongs to the TRAFAC class TrmE-Era-EngA-EngB-Septin-like GTPase superfamily. EngB GTPase family. Mg(2+) serves as cofactor.

In terms of biological role, necessary for normal cell division and for the maintenance of normal septation. This is Probable GTP-binding protein EngB from Wolinella succinogenes (strain ATCC 29543 / DSM 1740 / CCUG 13145 / JCM 31913 / LMG 7466 / NCTC 11488 / FDC 602W) (Vibrio succinogenes).